A 546-amino-acid chain; its full sequence is Elongator complex protein 3 (546 aa).

Positions 81 to 371 (RTASGIAVVA…YRVQRDIPMP (291 aa)) constitute a Radical SAM core domain. Residues Cys98, Cys108, and Cys111 each contribute to the [4Fe-4S] cluster site. Acetyl-CoA contacts are provided by residues Lys163, 473 to 476 (ELHV), 496 to 498 (FGM), and Tyr529. The region spanning 395–546 (TQCRDVRTRE…EGPYMVKRLQ (152 aa)) is the N-acetyltransferase domain.

Belongs to the ELP3 family. As to quaternary structure, component of the elongator complex. [4Fe-4S] cluster serves as cofactor.

The protein localises to the cytoplasm. It localises to the nucleus. The enzyme catalyses uridine(34) in tRNA + acetyl-CoA + S-adenosyl-L-methionine + H2O = 5-(carboxymethyl)uridine(34) in tRNA + 5'-deoxyadenosine + L-methionine + CoA + 2 H(+). It functions in the pathway tRNA modification; 5-methoxycarbonylmethyl-2-thiouridine-tRNA biosynthesis. In terms of biological role, catalytic tRNA acetyltransferase subunit of the elongator complex which is required for multiple tRNA modifications, including mcm5U (5-methoxycarbonylmethyl uridine), mcm5s2U (5-methoxycarbonylmethyl-2-thiouridine), and ncm5U (5-carbamoylmethyl uridine). In the elongator complex, acts as a tRNA uridine(34) acetyltransferase by mediating formation of carboxymethyluridine in the wobble base at position 34 in tRNAs. In Gallus gallus (Chicken), this protein is Elongator complex protein 3.